Here is a 75-residue protein sequence, read N- to C-terminus: Small ribosomal subunit protein bS18 (75 aa).

This sequence belongs to the bacterial ribosomal protein bS18 family. In terms of assembly, part of the 30S ribosomal subunit. Forms a tight heterodimer with protein bS6.

Binds as a heterodimer with protein bS6 to the central domain of the 16S rRNA, where it helps stabilize the platform of the 30S subunit. The polypeptide is Small ribosomal subunit protein bS18 (Hydrogenovibrio crunogenus (strain DSM 25203 / XCL-2) (Thiomicrospira crunogena)).